The chain runs to 174 residues: Bifunctional protein PyrR (174 aa).

Residues 38–39 (SG), 95–103 (DDVLATGRT), and Arg-128 each bind substrate. The short motif at 91–103 (ILLVDDVLATGRT) is the PRPP-binding element.

It belongs to the purine/pyrimidine phosphoribosyltransferase family. PyrR subfamily.

It catalyses the reaction UMP + diphosphate = 5-phospho-alpha-D-ribose 1-diphosphate + uracil. Its function is as follows. Regulates the transcription of the pyrimidine nucleotide (pyr) operon in response to exogenous pyrimidines. In terms of biological role, also displays a weak uracil phosphoribosyltransferase activity which is not physiologically significant. The polypeptide is Bifunctional protein PyrR (Ralstonia nicotianae (strain ATCC BAA-1114 / GMI1000) (Ralstonia solanacearum)).